The primary structure comprises 671 residues: DNA ligase (671 aa).

Residues 32-36 (DAEYD), 81-82 (SL), and Glu113 each bind NAD(+). Lys115 serves as the catalytic N6-AMP-lysine intermediate. The NAD(+) site is built by Arg136, Glu173, Lys290, and Lys314. Positions 408, 411, 426, and 432 each coordinate Zn(2+). In terms of domain architecture, BRCT spans 593–671 (EIDSPFAGKT…EAEMIRLLGA (79 aa)).

The protein belongs to the NAD-dependent DNA ligase family. LigA subfamily. Requires Mg(2+) as cofactor. The cofactor is Mn(2+).

It carries out the reaction NAD(+) + (deoxyribonucleotide)n-3'-hydroxyl + 5'-phospho-(deoxyribonucleotide)m = (deoxyribonucleotide)n+m + AMP + beta-nicotinamide D-nucleotide.. DNA ligase that catalyzes the formation of phosphodiester linkages between 5'-phosphoryl and 3'-hydroxyl groups in double-stranded DNA using NAD as a coenzyme and as the energy source for the reaction. It is essential for DNA replication and repair of damaged DNA. In Salmonella heidelberg (strain SL476), this protein is DNA ligase.